A 246-amino-acid polypeptide reads, in one-letter code: UDP-N-acetyl-D-mannosaminuronic acid transferase (246 aa).

The protein belongs to the glycosyltransferase 26 family.

The enzyme catalyses UDP-N-acetyl-alpha-D-mannosaminouronate + N-acetyl-alpha-D-glucosaminyl-di-trans,octa-cis-undecaprenyl diphosphate = beta-D-ManNAcA-(1-&gt;4)-alpha-D-GlcNAc-di-trans,octa-cis-undecaprenyl diphosphate + UDP + H(+). The protein operates within bacterial outer membrane biogenesis; enterobacterial common antigen biosynthesis. Functionally, catalyzes the synthesis of Und-PP-GlcNAc-ManNAcA (Lipid II), the second lipid-linked intermediate involved in enterobacterial common antigen (ECA) synthesis. The polypeptide is UDP-N-acetyl-D-mannosaminuronic acid transferase (Escherichia coli (strain ATCC 8739 / DSM 1576 / NBRC 3972 / NCIMB 8545 / WDCM 00012 / Crooks)).